The sequence spans 375 residues: Protein GOLM2 (375 aa).

The Cytoplasmic portion of the chain corresponds to 1–12 (MVGFGANRRGGR). The helical; Signal-anchor for type II membrane protein transmembrane segment at 13–33 (LPSFLLAALLLVIAVLAFNCW) threads the bilayer. The stretch at 34–198 (NAASRQAVLR…REQKATQRIQ (165 aa)) forms a coiled coil. The Lumenal segment spans residues 34–375 (NAASRQAVLR…SKPRFGDGVL (342 aa)). Disordered regions lie at residues 81–102 (LEQKEADYSQLSSQLQARDGQV), 193–327 (ATQR…DSQN), and 342–375 (RAVGLQKMKQNDEERDLQNDLVDYSKPRFGDGVL). Composition is skewed to basic and acidic residues over residues 193 to 204 (ATQRIQSSKDAE) and 350 to 375 (KQNDEERDLQNDLVDYSKPRFGDGVL).

The protein belongs to the GOLM family.

It is found in the membrane. This Gallus gallus (Chicken) protein is Protein GOLM2 (GOLM2).